Consider the following 487-residue polypeptide: NADH-quinone oxidoreductase subunit N (487 aa).

The next 13 helical transmembrane spans lie at 7-27, 38-58, 79-99, 111-131, 164-184, 207-227, 238-258, 276-296, 301-321, 328-348, 373-393, 406-426, and 451-471; these read ILGP…LLMV, LVGL…GLGA, YAKA…MVWL, ILVL…DLIA, FVLG…VYGF, LLIG…AVPF, APTP…LTLF, VIIL…IVQT, LMAY…AAGT, VLVY…VILA, AAAM…AGFF, GLFA…FYYL, and VILI…SVVV.

Belongs to the complex I subunit 2 family. NDH-1 is composed of 14 different subunits. Subunits NuoA, H, J, K, L, M, N constitute the membrane sector of the complex.

It is found in the cell inner membrane. It carries out the reaction a quinone + NADH + 5 H(+)(in) = a quinol + NAD(+) + 4 H(+)(out). Functionally, NDH-1 shuttles electrons from NADH, via FMN and iron-sulfur (Fe-S) centers, to quinones in the respiratory chain. The immediate electron acceptor for the enzyme in this species is believed to be ubiquinone. Couples the redox reaction to proton translocation (for every two electrons transferred, four hydrogen ions are translocated across the cytoplasmic membrane), and thus conserves the redox energy in a proton gradient. The chain is NADH-quinone oxidoreductase subunit N from Rhodospirillum rubrum (strain ATCC 11170 / ATH 1.1.1 / DSM 467 / LMG 4362 / NCIMB 8255 / S1).